The primary structure comprises 227 residues: PKHD-type hydroxylase BTH_II1201 (227 aa).

One can recognise a Fe2OG dioxygenase domain in the interval 78–178 (KVFPPLFNRY…RVASFFWIQS (101 aa)). Fe cation is bound by residues His-96, Asp-98, and His-159. 2-oxoglutarate is bound at residue Arg-169.

The cofactor is Fe(2+). It depends on L-ascorbate as a cofactor.

This is PKHD-type hydroxylase BTH_II1201 from Burkholderia thailandensis (strain ATCC 700388 / DSM 13276 / CCUG 48851 / CIP 106301 / E264).